Reading from the N-terminus, the 557-residue chain is Chaperonin GroEL 1 (557 aa).

Residues 29–32 (TLGP), Lys-50, 86–90 (DGTTT), Gly-416, and Asp-495 each bind ATP.

Belongs to the chaperonin (HSP60) family. Forms a cylinder of 14 subunits composed of two heptameric rings stacked back-to-back. Interacts with the co-chaperonin GroES.

The protein localises to the cytoplasm. It carries out the reaction ATP + H2O + a folded polypeptide = ADP + phosphate + an unfolded polypeptide.. Together with its co-chaperonin GroES, plays an essential role in assisting protein folding. The GroEL-GroES system forms a nano-cage that allows encapsulation of the non-native substrate proteins and provides a physical environment optimized to promote and accelerate protein folding. This is Chaperonin GroEL 1 from Protochlamydia amoebophila (strain UWE25).